Reading from the N-terminus, the 205-residue chain is Dephospho-CoA kinase (205 aa).

Residues 4-203 enclose the DPCK domain; sequence KIGITGGIGS…QKIHYLCSAK (200 aa). 12-17 serves as a coordination point for ATP; sequence GSGKSV.

The protein belongs to the CoaE family.

The protein localises to the cytoplasm. It carries out the reaction 3'-dephospho-CoA + ATP = ADP + CoA + H(+). The protein operates within cofactor biosynthesis; coenzyme A biosynthesis; CoA from (R)-pantothenate: step 5/5. Its function is as follows. Catalyzes the phosphorylation of the 3'-hydroxyl group of dephosphocoenzyme A to form coenzyme A. The polypeptide is Dephospho-CoA kinase (Bacteroides fragilis (strain YCH46)).